A 323-amino-acid polypeptide reads, in one-letter code: Acetyl esterase (323 aa).

An Involved in the stabilization of the negatively charged intermediate by the formation of the oxyanion hole motif is present at residues 91 to 93 (HGG). Residues Ser-165, Asp-262, and His-292 contribute to the active site.

It belongs to the 'GDXG' lipolytic enzyme family. As to quaternary structure, homodimer. Interacts with MalT and MelA.

The protein resides in the cytoplasm. Displays esterase activity towards short chain fatty esters (acyl chain length of up to 8 carbons). Able to hydrolyze triacetylglycerol (triacetin) and tributyrylglycerol (tributyrin), but not trioleylglycerol (triolein) or cholesterol oleate. Negatively regulates MalT activity by antagonizing maltotriose binding. Inhibits MelA galactosidase activity. This chain is Acetyl esterase, found in Salmonella paratyphi A (strain AKU_12601).